A 238-amino-acid chain; its full sequence is Fatty acid metabolism regulator protein (238 aa).

The HTH gntR-type domain occupies 6–74 (KGPASFAEKY…HGKPTRVNNF (69 aa)). The H-T-H motif DNA-binding region spans 34–53 (ERELSELIGVTRTTLREVLQ).

As to quaternary structure, homodimer.

It is found in the cytoplasm. Its function is as follows. Multifunctional regulator of fatty acid metabolism. This Shewanella baltica (strain OS155 / ATCC BAA-1091) protein is Fatty acid metabolism regulator protein.